The chain runs to 278 residues: Shikimate dehydrogenase (NADP(+)) (278 aa).

Shikimate is bound by residues 19–21 and threonine 66; that span reads SRS. Lysine 70 serves as the catalytic Proton acceptor. Positions 91 and 106 each coordinate shikimate. NADP(+) contacts are provided by residues 129–133 and phenylalanine 221; that span reads GAGGA. Tyrosine 223 serves as a coordination point for shikimate. Glycine 242 contacts NADP(+).

Belongs to the shikimate dehydrogenase family. Homodimer.

The catalysed reaction is shikimate + NADP(+) = 3-dehydroshikimate + NADPH + H(+). It participates in metabolic intermediate biosynthesis; chorismate biosynthesis; chorismate from D-erythrose 4-phosphate and phosphoenolpyruvate: step 4/7. In terms of biological role, involved in the biosynthesis of the chorismate, which leads to the biosynthesis of aromatic amino acids. Catalyzes the reversible NADPH linked reduction of 3-dehydroshikimate (DHSA) to yield shikimate (SA). The chain is Shikimate dehydrogenase (NADP(+)) from Anaeromyxobacter dehalogenans (strain 2CP-C).